The sequence spans 407 residues: Imidazolonepropionase (407 aa).

His68 and His70 together coordinate Fe(3+). The Zn(2+) site is built by His68 and His70. 4-imidazolone-5-propanoate is bound by residues Arg77, Tyr140, and His173. Tyr140 is a binding site for N-formimidoyl-L-glutamate. His238 contributes to the Fe(3+) binding site. His238 provides a ligand contact to Zn(2+). A 4-imidazolone-5-propanoate-binding site is contributed by Gln241. Fe(3+) is bound at residue Asp313. Asp313 contacts Zn(2+). Residues Asn315 and Gly317 each contribute to the N-formimidoyl-L-glutamate site. Residue Thr318 coordinates 4-imidazolone-5-propanoate.

The protein belongs to the metallo-dependent hydrolases superfamily. HutI family. Zn(2+) serves as cofactor. The cofactor is Fe(3+).

Its subcellular location is the cytoplasm. It carries out the reaction 4-imidazolone-5-propanoate + H2O = N-formimidoyl-L-glutamate. It functions in the pathway amino-acid degradation; L-histidine degradation into L-glutamate; N-formimidoyl-L-glutamate from L-histidine: step 3/3. Its function is as follows. Catalyzes the hydrolytic cleavage of the carbon-nitrogen bond in imidazolone-5-propanoate to yield N-formimidoyl-L-glutamate. It is the third step in the universal histidine degradation pathway. The chain is Imidazolonepropionase from Burkholderia multivorans (strain ATCC 17616 / 249).